The sequence spans 987 residues: Kinesin-like protein KIN-14G (987 aa).

The Calponin-homology (CH) domain maps to 44–163 (SLRRYEAAGW…CILALKSYSE (120 aa)). The segment at 201 to 221 (ISRTQSTDMLSTDQPLSSDGD) is disordered. The 328-residue stretch at 394–721 (NIRVYCRVRP…LKFAERVGSV (328 aa)) folds into the Kinesin motor domain. 478-485 (GQTGSGKT) contacts ATP. A coiled-coil region spans residues 725-754 (AARVNKDNSEVKELKEQIANLKMALVRKGN). Disordered regions lie at residues 759–849 (QPTA…ESKS) and 927–987 (NIQN…SLGT). Over residues 788–797 (MGNTSNNSRP) the composition is skewed to polar residues. Residues 840-849 (GKDEDRESKS) show a composition bias toward basic and acidic residues. Polar residues predominate over residues 964–974 (PPNTVNSQPQR).

It belongs to the TRAFAC class myosin-kinesin ATPase superfamily. Kinesin family. KIN-14 subfamily. In terms of assembly, monomer. In terms of tissue distribution, flower specific.

The protein localises to the cytoplasm. The protein resides in the cytoskeleton. Its function is as follows. Microtubule-binding motor protein. The chain is Kinesin-like protein KIN-14G from Arabidopsis thaliana (Mouse-ear cress).